The sequence spans 226 residues: ATP synthase F(0) complex subunit a (226 aa).

Transmembrane regions (helical) follow at residues 9 to 29 (FITP…FPSL), 68 to 88 (WTLM…LGLL), 97 to 117 (QLSM…ITGF), 138 to 158 (IPML…ALAV), and 184 to 204 (ISPT…ILEF).

Belongs to the ATPase A chain family. As to quaternary structure, component of the ATP synthase complex composed at least of ATP5F1A/subunit alpha, ATP5F1B/subunit beta, ATP5MC1/subunit c (homooctomer), MT-ATP6/subunit a, MT-ATP8/subunit 8, ATP5ME/subunit e, ATP5MF/subunit f, ATP5MG/subunit g, ATP5MK/subunit k, ATP5MJ/subunit j, ATP5F1C/subunit gamma, ATP5F1D/subunit delta, ATP5F1E/subunit epsilon, ATP5PF/subunit F6, ATP5PB/subunit b, ATP5PD/subunit d, ATP5PO/subunit OSCP. ATP synthase complex consists of a soluble F(1) head domain (subunits alpha(3) and beta(3)) - the catalytic core - and a membrane F(0) domain - the membrane proton channel (subunits c, a, 8, e, f, g, k and j). These two domains are linked by a central stalk (subunits gamma, delta, and epsilon) rotating inside the F1 region and a stationary peripheral stalk (subunits F6, b, d, and OSCP). Interacts with DNAJC30; interaction is direct.

Its subcellular location is the mitochondrion inner membrane. The enzyme catalyses H(+)(in) = H(+)(out). In terms of biological role, subunit a, of the mitochondrial membrane ATP synthase complex (F(1)F(0) ATP synthase or Complex V) that produces ATP from ADP in the presence of a proton gradient across the membrane which is generated by electron transport complexes of the respiratory chain. ATP synthase complex consist of a soluble F(1) head domain - the catalytic core - and a membrane F(1) domain - the membrane proton channel. These two domains are linked by a central stalk rotating inside the F(1) region and a stationary peripheral stalk. During catalysis, ATP synthesis in the catalytic domain of F(1) is coupled via a rotary mechanism of the central stalk subunits to proton translocation. With the subunit c (ATP5MC1), forms the proton-conducting channel in the F(0) domain, that contains two crucial half-channels (inlet and outlet) that facilitate proton movement from the mitochondrial intermembrane space (IMS) into the matrix. Protons are taken up via the inlet half-channel and released through the outlet half-channel, following a Grotthuss mechanism. The polypeptide is ATP synthase F(0) complex subunit a (Capra hircus (Goat)).